Here is a 110-residue protein sequence, read N- to C-terminus: MKAIFVSALLVVALVASTSAHHQELCTKGDDALVTELECIRLRISPETNAAFDNAVQQLNCLNRACAYRKMCATNNLEQAMSVYFTNEQIKEIHDAATACDPEAHHEHDH.

The signal sequence occupies residues 1 to 20; it reads MKAIFVSALLVVALVASTSA. Cystine bridges form between Cys-26/Cys-72, Cys-39/Cys-100, and Cys-61/Cys-66.

In terms of tissue distribution, expressed in the hemocytes, fat body and ovaries.

Its subcellular location is the secreted. In terms of biological role, has bacteriostatic activity against the Gram-positive bacterium M.luteus, but not against Gram-negative bacterium E.coli SBS363. Has fungistatic activity against C.neoformans, but not C.albicans. Binds and sequesters copper and iron ions. Copper-chelating is crucial for antimicrobial activity against M.luteus. In Rhipicephalus microplus (Cattle tick), this protein is Antimicrobial peptide microplusin.